We begin with the raw amino-acid sequence, 475 residues long: Ribulose bisphosphate carboxylase large chain (475 aa).

The residue at position 14 (Lys14) is an N6,N6,N6-trimethyllysine. Substrate contacts are provided by Asn123 and Thr173. Catalysis depends on Lys175, which acts as the Proton acceptor. Residue Lys177 participates in substrate binding. 3 residues coordinate Mg(2+): Lys201, Asp203, and Glu204. At Lys201 the chain carries N6-carboxylysine. The Proton acceptor role is filled by His294. The substrate site is built by Arg295, His327, and Ser379.

It belongs to the RuBisCO large chain family. Type I subfamily. As to quaternary structure, heterohexadecamer of 8 large chains and 8 small chains; disulfide-linked. The disulfide link is formed within the large subunit homodimers. Mg(2+) is required as a cofactor. The disulfide bond which can form in the large chain dimeric partners within the hexadecamer appears to be associated with oxidative stress and protein turnover.

It localises to the plastid. It catalyses the reaction 2 (2R)-3-phosphoglycerate + 2 H(+) = D-ribulose 1,5-bisphosphate + CO2 + H2O. The enzyme catalyses D-ribulose 1,5-bisphosphate + O2 = 2-phosphoglycolate + (2R)-3-phosphoglycerate + 2 H(+). Its function is as follows. RuBisCO catalyzes two reactions: the carboxylation of D-ribulose 1,5-bisphosphate, the primary event in carbon dioxide fixation, as well as the oxidative fragmentation of the pentose substrate in the photorespiration process. Both reactions occur simultaneously and in competition at the same active site. This is Ribulose bisphosphate carboxylase large chain (rbcL) from Euglena longa (Euglenophycean alga).